The sequence spans 3021 residues: Genome polyprotein (3021 aa).

At S2 the chain carries N-acetylserine; by host. The interval 2-23 (STLPKPQRKTKRNTIRRPQDVK) is interaction with STAT1. The interaction with EIF2AK2/PKR stretch occupies residues 2–58 (STLPKPQRKTKRNTIRRPQDVKFPGGGQIVGGVYVLPRRGPRLGVRATRKTSERSQP). Residues 2–59 (STLPKPQRKTKRNTIRRPQDVKFPGGGQIVGGVYVLPRRGPRLGVRATRKTSERSQPR) are interaction with DDX3X. Residues 2-75 (STLPKPQRKT…PKARRSEGRS (74 aa)) are disordered. At 2–168 (STLPKPQRKT…EDGINFATGN (167 aa)) the chain is on the cytoplasmic side. 2 consecutive short sequence motifs (nuclear localization signal) follow at residues 5-13 (PKPQRKTKR) and 38-43 (PRRGPR). The span at 7–16 (PQRKTKRNTI) shows a compositional bias: basic residues. The residue at position 53 (S53) is a Phosphoserine; by host. 2 short sequence motifs (nuclear localization signal) span residues 58 to 64 (PRGRRQP) and 66 to 71 (PKARRS). The segment covering 58-68 (PRGRRQPIPKA) has biased composition (basic residues). At S99 the chain carries Phosphoserine; by host. The segment at 112-152 (PRRRSRNLGKVIDTLTCGFADLMGYIPLVGAPVGGVARALA) is important for endoplasmic reticulum and mitochondrial localization. S116 bears the Phosphoserine; by host PKA mark. The tract at residues 122-173 (VIDTLTCGFADLMGYIPLVGAPVGGVARALAHGVRALEDGINFATGNLPGCS) is interaction with APOA2. The segment at 164-167 (FATG) is important for lipid droplets localization. Residues 169 to 189 (LPGCSFSIFLLALFSCLIHPA) traverse the membrane as a helical segment. A propeptide spans 178 to 191 (LLALFSCLIHPAAS) (ER anchor for the core protein, removed in mature form by host signal peptidase). Residues 190–358 (ASLEWRNTSG…AGAHWGILAG (169 aa)) lie on the Lumenal side of the membrane. Residues N196, N209, and N234 are each glycosylated (N-linked (GlcNAc...) asparagine; by host). Positions 265-296 (LVGAATMCSALYVGDMCGAVFLVGQAFTFRPR) are important for fusion. N305 carries an N-linked (GlcNAc...) asparagine; by host glycan. A helical transmembrane segment spans residues 359-379 (LAYYSMQGNWAKVAIIMVMFS). Over 380-731 (GVDAHTYTTG…WEFVILVFLL (352 aa)) the chain is Lumenal. The interval 385-412 (TYTTGGTASRHTQAFAGLFDIGPQQKLQ) is HVR1. N-linked (GlcNAc...) (high mannose) asparagine; by host glycosylation is found at N417, N423, and N430. Disulfide bonds link C429-C553, C452-C459, C487-C495, and C504-C509. The N-linked (GlcNAc...) asparagine; by host glycan is linked to N448. An HVR2 region spans residues 474 to 479 (DANITG). The N-linked (GlcNAc...) asparagine; by host glycan is linked to N476. A CD81-binding 1 region spans residues 481–494 (SDDRPYCWHYAPRP). The N-linked (GlcNAc...) asparagine; by host glycan is linked to N533. The CD81-binding 2 stretch occupies residues 545–552 (PPSGRWFG). A glycan (N-linked (GlcNAc...) asparagine; by host) is linked at N557. A disulfide bond links C565 and C570. An N-linked (GlcNAc...) asparagine; by host glycan is attached at N578. 3 cysteine pairs are disulfide-bonded: C587/C591, C603/C626, and C613/C650. An N-linked (GlcNAc...) (high mannose) asparagine; by host glycan is attached at N651. Residues C658 and C683 are joined by a disulfide bond. The PKR/eIF2-alpha phosphorylation homology domain (PePHD) stretch occupies residues 666 to 677 (SEQHPLLHSTTE). A helical transmembrane segment spans residues 732–752 (LADARVCVALWLMLMISQTEA). Residues 753–763 (ALENLVTLNAV) lie on the Lumenal side of the membrane. Residues 764–784 (AAAGTHGIGWYLVAFCAAWYV) traverse the membrane as a helical segment. Residues 785 to 787 (RGK) lie on the Cytoplasmic side of the membrane. Residues 788–809 (LVPLVTYSLTGLWSLALLVLLL) form a helical membrane-spanning segment. The Lumenal segment spans residues 810 to 819 (PQRAYAWSGE). The helical transmembrane segment at 820-840 (DSATLGAGVLVLFGFFTLSPW) threads the bilayer. Residues 841–844 (YKHW) lie on the Cytoplasmic side of the membrane. Residues 845–864 (IGRLMWWNQYTICRCESALH) form a helical membrane-spanning segment. Over 865–887 (VWVPPLLARGSRDGVILLTSLLY) the chain is Lumenal. A helical membrane pass occupies residues 888 to 908 (PSLIFDITKLLMAVLGPLYLI). One can recognise a Peptidase C18 domain in the interval 905 to 1032 (LYLIQATITT…DYREMGWRLL (128 aa)). Topologically, residues 909–1663 (QATITTTPYF…CMSADLEVTT (755 aa)) are cytoplasmic. The interval 910-1212 (ATITTTPYFV…PVETLSTQAR (303 aa)) is protease NS2-3. C928 is lipidated: S-palmitoyl cysteine; by host. The interaction with host SCPS1 stretch occupies residues 935-955 (IGGKYFQMIILSIGRWFNTYL). Residues H958, E978, and C999 each act as for protease NS2 activity; shared with dimeric partner in the active site. One can recognise a Peptidase S29 domain in the interval 1033-1214 (APITAYAQQT…ETLSTQARSP (182 aa)). Residues H1089 and D1113 each act as charge relay system; for serine protease NS3 activity in the active site. Zn(2+) contacts are provided by C1129 and C1131. Residue S1171 is the Charge relay system; for serine protease NS3 activity of the active site. The Zn(2+) site is built by C1177 and H1181. A Helicase ATP-binding domain is found at 1223–1375 (PAVPQSYQVG…SNIEEVALGS (153 aa)). ATP is bound at residue 1236–1243 (APTGSGKS). Residues S1243 and E1323 each coordinate Mg(2+). The DECH box signature appears at 1322–1325 (DECH). One can recognise a Helicase C-terminal domain in the interval 1382 to 1544 (YGKAIPIALL…DLQPAETTVR (163 aa)). Residues 1492 to 1504 (QRRGRTGRGRLGT) form an RNA-binding region. Residues 1664-1684 (STWVLLGGVLAALAAYCLSVG) traverse the membrane as a helical segment. The interval 1685–1696 (CVVIVGHIELEG) is NS3-binding. The Cytoplasmic segment spans residues 1685 to 1811 (CVVIVGHIEL…SVTSPLTTNQ (127 aa)). Residues 1812–1830 (TMFFNILGGWVATHLAGPQ) traverse the membrane as a helical segment. Over 1831–1834 (SSSA) the chain is Lumenal. Residues 1835 to 1855 (FVVSGLAGAAIGGIGLGRVLL) traverse the membrane as a helical segment. Residue D1856 is a topological domain, cytoplasmic. The chain crosses the membrane as a helical span at residues 1857-1877 (ILAGYGAGVSGALVAFKIMGG). Residues 1878–1887 (ECPTAEDMVN) are Lumenal-facing. A helical membrane pass occupies residues 1888-1908 (LLPAILSPGALVVGVICAAIL). Residues 1909–1978 (RRHVGPGEGA…WINEDYPSPC (70 aa)) lie on the Cytoplasmic side of the membrane. C1978 is lipidated: S-palmitoyl cysteine; by host. The stretch at 1979–2008 (SDDWLRTIWDWVCSVLADFKAWLSAKIMPA) is an intramembrane region. The Cytoplasmic segment spans residues 2009–3000 (LPGLPFISCQ…YHSVSRARTR (992 aa)). The Zn(2+) site is built by C2017, C2035, C2037, and C2058. The FKBP8-binding stretch occupies residues 2126–2214 (EFFTEVDGVR…ASSSASQLSA (89 aa)). A transcriptional activation region spans residues 2126 to 2338 (EFFTEVDGVR…PVPPPRRKRT (213 aa)). Residues 2141 to 2145 (PPCKP) form an interaction with non-structural protein 4A region. The disordered stretch occupies residues 2193-2215 (ARRLARGSPPSEASSSASQLSAP). Positions 2195-2448 (RLARGSPPSE…ALITPCSAEE (254 aa)) are interaction with host SKP2. A phosphoserine; by host mark is found at S2200, S2203, S2207, S2210, S2213, and S2216. Residues 2200-2215 (SPPSEASSSASQLSAP) show a composition bias toward low complexity. The tract at residues 2216 to 2255 (SLKATCQTHRPHPDAELVDANLLWRQEMGSNITRVESETK) is ISDR. The interaction with EIF2AK2/PKR stretch occupies residues 2216–2281 (SLKATCQTHR…VEPSVAAECF (66 aa)). The NS4B-binding stretch occupies residues 2255–2312 (KVVVLDSFEPLRAETDDVEPSVAAECFKKPPKYPPALPIWARPDYNPPLLDRWKAPDY). Residues 2305–2387 (DRWKAPDYVP…STTSKVPPSP (83 aa)) form a V3 region. The SH3-binding signature appears at 2328-2331 (PPVP). A Nuclear localization signal motif is present at residues 2333–2341 (PRRKRTIQL). K2356 is covalently cross-linked (Glycyl lysine isopeptide (Lys-Gly) (interchain with G-Cter in ubiquitin)). The segment at 2356–2417 (KSFPSSKPQE…DPDLSCDSWS (62 aa)) is disordered. Low complexity-rich tracts occupy residues 2359–2381 (PSSK…STTS) and 2388–2401 (GGES…SMPP). Phosphoserine; by host is present on residues S2459 and S2472. Residues 2644 to 2762 (PLGFSYDTRC…VAESDGVDED (119 aa)) form the RdRp catalytic domain. Residues D2650, D2748, and D2749 each contribute to the Mg(2+) site. Residues 3001–3021 (HLLLCLLLLTVGVGIFLLPAR) form a helical membrane-spanning segment.

The protein belongs to the hepacivirus polyprotein family. In terms of assembly, homooligomer. Interacts with E1 (via C-terminus). Interacts with the non-structural protein 5A. Interacts (via N-terminus) with host STAT1 (via SH2 domain); this interaction results in decreased STAT1 phosphorylation and ubiquitin-mediated proteasome-dependent STAT1 degradation, leading to decreased IFN-stimulated gene transcription. Interacts with host STAT3; this interaction constitutively activates STAT3. Interacts with host LTBR receptor. Interacts with host TNFRSF1A receptor and possibly induces apoptosis. Interacts with host HNRPK. Interacts with host YWHAE. Interacts with host UBE3A/E6AP. Interacts with host DDX3X. Interacts with host APOA2. Interacts with host RXRA protein. Interacts with host SP110 isoform 3/Sp110b; this interaction sequesters the transcriptional corepressor SP110 away from the nucleus. Interacts with host CREB3 nuclear transcription protein; this interaction triggers cell transformation. Interacts with host ACY3. Interacts with host C1QR1. Interacts with host RBM24; this interaction, which enhances the interaction of the mature core protein with 5'-UTR, may inhibit viral translation and favor replication. Interacts with host EIF2AK2/PKR; this interaction induces the autophosphorylation of EIF2AK2. Part of the viral assembly initiation complex composed of NS2, E1, E2, NS3, NS4A, NS5A and the mature core protein. Forms a heterodimer with envelope glycoprotein E2. Interacts with mature core protein. Interacts with protease NS2. The heterodimer E1/E2 interacts with host CLDN1; this interaction plays a role in viral entry into host cell. Interacts with host SPSB2 (via C-terminus). Part of the viral assembly initiation complex composed of NS2, E1, E2, NS3, NS4A, NS5A and the mature core protein. Interacts with host NEURL3; this interaction prevents E1 binding to glycoprotein E2. As to quaternary structure, forms a heterodimer with envelope glycoprotein E1. Interacts with host CD81 and SCARB1 receptors; these interactions play a role in viral entry into host cell. Interacts with host EIF2AK2/PKR; this interaction inhibits EIF2AK2 and probably allows the virus to evade the innate immune response. Interacts with host CD209/DC-SIGN and CLEC4M/DC-SIGNR. Interact with host SPCS1; this interaction is essential for viral particle assembly. Interacts with protease NS2. The heterodimer E1/E2 interacts with host CLDN1; this interaction plays a role in viral entry into host cell. Part of the viral assembly initiation complex composed of NS2, E1, E2, NS3, NS4A, NS5A and the mature core protein. Interacts with host SLC3A2/4F2hc; the interaction may facilitate viral entry into host cell. Interacts with human PLSCR1. In terms of assembly, homohexamer. Homoheptamer. Interacts with protease NS2. Homodimer. Interacts with host SPCS1; this interaction is essential for viral particle assembly. Interacts with envelope glycoprotein E1. Interacts with envelope glycoprotein E2. Interacts with viroporin p7. Interacts with serine protease/helicase NS3. Part of the replication complex composed of NS2, NS3, NS4A, NS4B, NS5A and the RNA-directed RNA polymerase embedded in an ER-derived membranous web. Part of the viral assembly initiation complex composed of NS2, E1, E2, NS3, NS4A, NS5A and the mature core protein. As to quaternary structure, interacts with protease NS2. Interacts with non-structural protein 4A; this interaction stabilizes the folding of NS3 serine protease. NS3-NS4A interaction is essential for NS3 activation and allows membrane anchorage of the latter. NS3/NS4A complex also prevents phosphorylation of host IRF3, thus preventing the establishment of dsRNA induced antiviral state. Interacts with host MAVS; this interaction leads to the cleavage and inhibition of host MAVS. Interacts with host TICAM1; this interaction leads to the cleavage and inhibition of host TICAM1. Interacts with host TANK-binding kinase/TBK1; this interaction results in the inhibition of the association between TBK1 and IRF3, which leads to the inhibition of IRF3 activation. Interacts with host RBM24. Part of the replication complex composed of NS2, NS3, NS4A, NS4B, NS5A and the RNA-directed RNA polymerase embedded in an ER-derived membranous web. Part of the viral assembly initiation complex composed of NS2, E1, E2, NS3, NS4A, NS5A and the mature core protein. In terms of assembly, interacts with NS3 serine protease; this interaction stabilizes the folding of NS3 serine protease. NS3-NS4A interaction is essential for NS3 activation and allows membrane anchorage of the latter. Interacts with non-structural protein 5A (via N-terminus). Part of the replication complex composed of NS2, NS3, NS4A, NS4B, NS5A and the RNA-directed RNA polymerase embedded in an ER-derived membranous web. Part of the viral assembly initiation complex composed of NS2, E1, E2, NS3, NS4A, NS5A and the mature core protein. Homomultimer. Interacts with non-structural protein NS5A. Interacts with host PLA2G4C; this interaction likely initiates the recruitment of replication complexes to lipid droplets. Interacts with host STING; this interaction disrupts the interaction between STING and TBK1 thereby suppressing the interferon signaling. Part of the replication complex composed of NS2, NS3, NS4A, NS4B, NS5A and the RNA-directed RNA polymerase embedded in an ER-derived membranous web. As to quaternary structure, monomer. Homodimer; dimerization is required for RNA-binding. Interacts with the mature core protein. Interacts (via N-terminus) with non-structural protein 4A. Interacts with non-structural protein 4B. Interacts (via region D2) with RNA-directed RNA polymerase. Part of the viral assembly initiation complex composed of NS2, E1, E2, NS3, NS4A, NS5A and the mature core protein. Part of the replication complex composed of NS2, NS3, NS4A, NS4B, NS5A and the RNA-directed RNA polymerase embedded in an ER-derived membranous web. Interacts with host GRB2. Interacts with host BIN1. Interacts with host PIK3R1. Interacts with host SRCAP. Interacts with host FKBP8. Interacts (via C-terminus) with host VAPB (via MSP domain). Interacts with host EIF2AK2/PKR; this interaction leads to disruption of EIF2AK2 dimerization by NS5A and probably allows the virus to evade the innate immune response. Interacts (via N-terminus) with host PACSIN2 (via N-terminus); this interaction attenuates protein kinase C alpha-mediated phosphorylation of PACSIN2 by disrupting the interaction between PACSIN2 and PRKCA. Interacts (via N-terminus) with host SRC kinase (via SH2 domain). Interacts with most Src-family kinases. Interacts with host IFI27 and SKP2; promotes the ubiquitin-mediated proteasomal degradation of NS5A. Interacts with host GPS2. Interacts with host TNFRSF21; this interaction allows the modulation by the virus of JNK, p38 MAPK, STAT3, and Akt signaling pathways in a DR6-dependent manner. Interacts (via N-terminus) with host CIDEB (via N-terminus); this interaction seems to regulate the association of HCV particles with APOE. Interacts with host CHKA/Choline Kinase-alpha; CHKA bridges host PI4KA and NS5A and potentiates NS5A-stimulated PI4KA activity, which then facilitates the targeting of the ternary complex to the ER for viral replication. Interacts with host SPSB2 (via C-terminus); this interaction targets NS5A for ubiquitination and degradation. Interacts with host RAB18; this interaction may promote the association of NS5A and other replicase components with lipid droplets. Interacts (via region D2) with host PPIA/CYPA; the interaction stimulates RNA-binding ability of NS5A and is dependent on the peptidyl-prolyl cis-trans isomerase activity of PPIA/CYPA. Interacts with host TRIM14; this interaction induces the degradation of NS5A. In terms of assembly, homooligomer. Interacts with non-structural protein 5A. Interacts with host VAPB. Interacts with host PRK2/PKN2. Interacts with host HNRNPA1 and SEPT6; these interactions facilitate viral replication. Part of the replication complex composed of NS2, NS3, NS4A, NS4B, NS5A and the RNA-directed RNA polymerase. Requires Zn(2+) as cofactor. Mg(2+) serves as cofactor. Post-translationally, specific enzymatic cleavages in vivo yield mature proteins. The structural proteins, core, E1, E2 and p7 are produced by proteolytic processing by host signal peptidases. The core protein precursor is synthesized as a 23 kDa, which is retained in the ER membrane through the hydrophobic signal peptide. Cleavage by the signal peptidase releases the 21 kDa mature core protein. The cleavage of the core protein precursor occurs between aminoacids 176 and 188 but the exact cleavage site is not known. Some degraded forms of the core protein appear as well during the course of infection. The other proteins (p7, NS2, NS3, NS4A, NS4B, NS5A and NS5B) are cleaved by the viral proteases. Autoprocessing between NS2 and NS3 is mediated by the NS2 cysteine protease catalytic domain and regulated by the NS3 N-terminal domain. In terms of processing, phosphorylated by host PKC and PKA. Ubiquitinated; mediated by UBE3A and leading to core protein subsequent proteasomal degradation. Post-translationally, highly N-glycosylated. In terms of processing, palmitoylation is required for NS2/3 autoprocessing and E2 recruitment to membranes. Palmitoylated. This modification may play a role in its polymerization or in protein-protein interactions. Post-translationally, phosphorylated on serines in a basal form termed p56. p58 is a hyperphosphorylated form of p56. p56 and p58 coexist in the cell in roughly equivalent amounts. Hyperphosphorylation is dependent on the presence of NS4A. Host CSNK1A1/CKI-alpha or RPS6KB1 kinases may be responsible for NS5A phosphorylation. In terms of processing, tyrosine phosphorylation is essential for the interaction with host SRC. Ubiquitinated. Ubiquitination, most probably at Lys-2350, mediated by host IFI27 and SKP2 leads to proteasomal degradation, restricting viral infection. Ubiquitination by host TRIM22 leads to interruption of viral replication. Post-translationally, the N-terminus is phosphorylated by host PRK2/PKN2.

The protein localises to the host endoplasmic reticulum membrane. The protein resides in the host mitochondrion membrane. It is found in the virion. Its subcellular location is the host cytoplasm. It localises to the host nucleus. The protein localises to the host lipid droplet. The protein resides in the virion membrane. It is found in the host mitochondrion. Its subcellular location is the host cell membrane. It localises to the host perinuclear region. The catalysed reaction is Hydrolysis of four peptide bonds in the viral precursor polyprotein, commonly with Asp or Glu in the P6 position, Cys or Thr in P1 and Ser or Ala in P1'.. It carries out the reaction a ribonucleoside 5'-triphosphate + H2O = a ribonucleoside 5'-diphosphate + phosphate + H(+). It catalyses the reaction ATP + H2O = ADP + phosphate + H(+). The enzyme catalyses RNA(n) + a ribonucleoside 5'-triphosphate = RNA(n+1) + diphosphate. With respect to regulation, inhibited by the antiviral drug hexamethylene amiloride. Inhibition by amantadine appears to be genotype-dependent. Also inhibited by long-alkyl-chain iminosugar derivatives. Its activity is regulated as follows. Activity is up-regulated by PRK2/PKN2-mediated phosphorylation. Functionally, packages viral RNA to form a viral nucleocapsid, and promotes virion budding. Participates in the viral particle production as a result of its interaction with the non-structural protein 5A. Binds RNA and may function as a RNA chaperone to induce the RNA structural rearrangements taking place during virus replication. Modulates viral translation initiation by interacting with viral IRES and 40S ribosomal subunit. Affects various cell signaling pathways, host immunity and lipid metabolism. Prevents the establishment of cellular antiviral state by blocking the interferon-alpha/beta (IFN-alpha/beta) and IFN-gamma signaling pathways and by blocking the formation of phosphorylated STAT1 and promoting ubiquitin-mediated proteasome-dependent degradation of STAT1. Activates STAT3 leading to cellular transformation. Regulates the activity of cellular genes, including c-myc and c-fos. May repress the promoter of p53, and sequester CREB3 and SP110 isoform 3/Sp110b in the cytoplasm. Represses cell cycle negative regulating factor CDKN1A, thereby interrupting an important check point of normal cell cycle regulation. Targets transcription factors involved in the regulation of inflammatory responses and in the immune response: suppresses TNF-induced NF-kappa-B activation, and activates AP-1. Binds to dendritic cells (DCs) via C1QR1, resulting in down-regulation of T-lymphocytes proliferation. Alters lipid metabolism by interacting with hepatocellular proteins involved in lipid accumulation and storage. Induces up-regulation of FAS promoter activity, and thereby contributes to the increased triglyceride accumulation in hepatocytes (steatosis). In terms of biological role, forms a heterodimer with envelope glycoprotein E2, which mediates virus attachment to the host cell, virion internalization through clathrin-dependent endocytosis and fusion with host membrane. Fusion with the host cell is most likely mediated by both E1 and E2, through conformational rearrangements of the heterodimer required for fusion rather than a classical class II fusion mechanism. E1/E2 heterodimer binds host apolipoproteins such as APOB and ApoE thereby forming a lipo-viro-particle (LVP). APOE associated to the LVP allows the initial virus attachment to cell surface receptors such as the heparan sulfate proteoglycans (HSPGs), syndecan-1 (SDC1), syndecan-1 (SDC2), the low-density lipoprotein receptor (LDLR) and scavenger receptor class B type I (SCARB1). The cholesterol transfer activity of SCARB1 allows E2 exposure and binding of E2 to SCARB1 and the tetraspanin CD81. E1/E2 heterodimer binding on CD81 activates the epithelial growth factor receptor (EGFR) signaling pathway. Diffusion of the complex E1-E2-EGFR-SCARB1-CD81 to the cell lateral membrane allows further interaction with Claudin 1 (CLDN1) and occludin (OCLN) to finally trigger HCV entry. Forms a heterodimer with envelope glycoprotein E1, which mediates virus attachment to the host cell, virion internalization through clathrin-dependent endocytosis and fusion with host membrane. Fusion with the host cell is most likely mediated by both E1 and E2, through conformational rearrangements of the heterodimer required for fusion rather than a classical class II fusion mechanism. The interaction between envelope glycoprotein E2 and host apolipoprotein E/APOE allows the proper assembly, maturation and infectivity of the viral particles. This interaction is probably promoted via the up-regulation of cellular autophagy by the virus. E1/E2 heterodimer binds host apolipoproteins such as APOB and APOE thereby forming a lipo-viro-particle (LVP). APOE associated to the LVP allows the initial virus attachment to cell surface receptors such as the heparan sulfate proteoglycans (HSPGs), syndecan-1 (SDC1), syndecan-1 (SDC2), the low-density lipoprotein receptor (LDLR) and scavenger receptor class B type I (SCARB1). The cholesterol transfer activity of SCARB1 allows E2 exposure and binding of E2 to SCARB1 and the tetraspanin CD81. E1/E2 heterodimer binding on CD81 activates the epithelial growth factor receptor (EGFR) signaling pathway. Diffusion of the complex E1-E2-EGFR-SCARB1-CD81 to the cell lateral membrane allows further interaction with Claudin 1 (CLDN1) and occludin (OCLN) to finally trigger HCV entry. Inhibits host EIF2AK2/PKR activation, preventing the establishment of an antiviral state. Viral ligand for CD209/DC-SIGN and CLEC4M/DC-SIGNR, which are respectively found on dendritic cells (DCs), and on liver sinusoidal endothelial cells and macrophage-like cells of lymph node sinuses. These interactions allow the capture of circulating HCV particles by these cells and subsequent facilitated transmission to permissive cells such as hepatocytes and lymphocyte subpopulations. The interaction between E2 and host amino acid transporter complex formed by SLC3A2 and SLC7A5/LAT1 may facilitate viral entry into host cell. Its function is as follows. Ion channel protein that acts as a viroporin and plays an essential role in the assembly, envelopment and secretion of viral particles. Regulates the host cell secretory pathway, which induces the intracellular retention of viral glycoproteins and favors assembly of viral particles. Creates a pore in acidic organelles and releases Ca(2+) and H(+) in the cytoplasm of infected cells, leading to a productive viral infection. High levels of cytoplasmic Ca(2+) may trigger membrane trafficking and transport of viral ER-associated proteins to viroplasms, sites of viral genome replication. This ionic imbalance induces the assembly of the inflammasome complex, which triggers the maturation of pro-IL-1beta into IL-1beta through the action of caspase-1. Targets also host mitochondria and induces mitochondrial depolarization. In addition of its role as a viroporin, acts as a lipid raft adhesion factor. Functionally, cysteine protease required for the proteolytic auto-cleavage between the non-structural proteins NS2 and NS3. The N-terminus of NS3 is required for the function of NS2 protease (active region NS2-3). Promotes the initiation of viral particle assembly by mediating the interaction between structural and non-structural proteins. In terms of biological role, displays three enzymatic activities: serine protease with a chymotrypsin-like fold, NTPase and RNA helicase. NS3 serine protease, in association with NS4A, is responsible for the cleavages of NS3-NS4A, NS4A-NS4B, NS4B-NS5A and NS5A-NS5B. The NS3/NS4A complex prevents phosphorylation of host IRF3, thus preventing the establishment of dsRNA induced antiviral state. The NS3/NS4A complex induces host amino acid transporter component SLC3A2, thus contributing to HCV propagation. NS3 RNA helicase binds to RNA and unwinds both dsDNA and dsRNA in the 3' to 5' direction, and likely resolves RNA complicated stable secondary structures in the template strand. Binds a single ATP and catalyzes the unzipping of a single base pair of dsRNA. Inhibits host antiviral proteins TBK1 and IRF3 thereby preventing the establishment of an antiviral state. Cleaves host MAVS/CARDIF thereby preventing the establishment of an antiviral state. Cleaves host TICAM1/TRIF, thereby disrupting TLR3 signaling and preventing the establishment of an antiviral state. Peptide cofactor which forms a non-covalent complex with the N-terminal of NS3 serine protease. The NS3/NS4A complex prevents phosphorylation of host IRF3, thus preventing the establishment of dsRNA induced antiviral state. The NS3/NS4A complex induces host amino acid transporter component SLC3A2, thus contributing to HCV propagation. Its function is as follows. Induces a specific membrane alteration that serves as a scaffold for the virus replication complex. This membrane alteration gives rise to the so-called ER-derived membranous web that contains the replication complex. NS4B self-interaction contributes to its function in membranous web formation. Promotes host TRIF protein degradation in a CASP8-dependent manner thereby inhibiting host TLR3-mediated interferon signaling. Disrupts the interaction between STING and TBK1 contributing to the inhibition of interferon signaling. Functionally, phosphorylated protein that is indispensable for viral replication and assembly. Both hypo- and hyperphosphorylated states are required for the viral life cycle. The hyperphosphorylated form of NS5A is an inhibitor of viral replication. Involved in RNA-binding and especially in binding to the viral genome. Zinc is essential for RNA-binding. Participates in the viral particle production as a result of its interaction with the mature viral core protein. Its interaction with host VAPB may target the viral replication complex to vesicles. Down-regulates viral IRES translation initiation. Mediates interferon resistance, presumably by interacting with and inhibiting host EIF2AK2/PKR. Prevents BIN1-induced apoptosis. Acts as a transcriptional activator of some host genes important for viral replication when localized in the nucleus. Via the interaction with host PACSIN2, modulates lipid droplet formation in order to promote virion assembly. Modulates TNFRSF21/DR6 signaling pathway for viral propagation. In terms of biological role, RNA-dependent RNA polymerase that performs primer-template recognition and RNA synthesis during viral replication. Initiates RNA transcription/replication at a flavin adenine dinucleotide (FAD), resulting in a 5'- FAD cap on viral RNAs. In this way, recognition of viral 5' RNA by host pattern recognition receptors can be bypassed, thereby evading activation of antiviral pathways. This chain is Genome polyprotein, found in Homo sapiens (Human).